A 512-amino-acid chain; its full sequence is Secreted triacylglycerol lipase LIP5 (512 aa).

Positions 1–17 (MMYASLVHWLALAVALA) are cleaved as a signal peptide. Cysteine 118 and cysteine 292 are joined by a disulfide. Serine 203 acts as the Nucleophile in catalysis. Asparagine 316 carries an N-linked (GlcNAc...) asparagine glycan. Residue aspartate 352 is part of the active site. N-linked (GlcNAc...) asparagine glycosylation occurs at asparagine 361. Histidine 386 is an active-site residue. N-linked (GlcNAc...) asparagine glycosylation is present at asparagine 453. The segment at 480 to 512 (KGDISPGEGGDHTKESKKAAAKFKAEKKHGKHH) is disordered. The span at 488–497 (GGDHTKESKK) shows a compositional bias: basic and acidic residues. Residues 498-512 (AAAKFKAEKKHGKHH) show a composition bias toward basic residues.

It belongs to the AB hydrolase superfamily. Lipase family. Class Lip subfamily.

The protein localises to the secreted. It carries out the reaction a triacylglycerol + H2O = a diacylglycerol + a fatty acid + H(+). It catalyses the reaction a monoacylglycerol + H2O = glycerol + a fatty acid + H(+). The catalysed reaction is a diacylglycerol + H2O = a monoacylglycerol + a fatty acid + H(+). Functionally, secreted lipase that hydrolyzes acylglycerol lipids such as triacylglycerols and consequently releases free fatty acid. Can hydrolyze 4-nitrophenyl palmitate to release 4-nitrophenol and palmitoic acid. Due to an absence of fatty acid synthase genes in Malassezia species, secretory lipases are essential for the yeast to generate free fatty acids from degradation of sebum and assimilate them as lipid sources for growth. Plays an essential role at the pathogen-host interface during disease progression. This Malassezia restricta (strain ATCC 96810 / NBRC 103918 / CBS 7877) (Seborrheic dermatitis infection agent) protein is Secreted triacylglycerol lipase LIP5.